The chain runs to 239 residues: 2-C-methyl-D-erythritol 4-phosphate cytidylyltransferase (239 aa).

This sequence belongs to the IspD/TarI cytidylyltransferase family. IspD subfamily. As to quaternary structure, homodimer.

The catalysed reaction is 2-C-methyl-D-erythritol 4-phosphate + CTP + H(+) = 4-CDP-2-C-methyl-D-erythritol + diphosphate. It functions in the pathway isoprenoid biosynthesis; isopentenyl diphosphate biosynthesis via DXP pathway; isopentenyl diphosphate from 1-deoxy-D-xylulose 5-phosphate: step 2/6. In terms of biological role, catalyzes the formation of 4-diphosphocytidyl-2-C-methyl-D-erythritol from CTP and 2-C-methyl-D-erythritol 4-phosphate (MEP). The polypeptide is 2-C-methyl-D-erythritol 4-phosphate cytidylyltransferase (Sodalis glossinidius (strain morsitans)).